A 755-amino-acid polypeptide reads, in one-letter code: Photosystem I P700 chlorophyll a apoprotein A1 (755 aa).

Helical transmembrane passes span 72 to 95, 158 to 181, 197 to 221, 297 to 315, 352 to 375, 391 to 417, 439 to 461, and 536 to 554; these read IFSA…YHGA, LLCT…FHYH, LNHH…HVAI, QAHH…GHMY, WHAQ…QHMY, ISLF…IYMV, AIIS…FYVH, and FMVH…LILL. [4Fe-4S] cluster-binding residues include Cys-578 and Cys-587. Helical transmembrane passes span 594-615 and 669-691; these read HVFL…HFSW and LSAY…MFLF. His-680 lines the chlorophyll a' pocket. Met-688 and Tyr-696 together coordinate chlorophyll a. Trp-697 is a binding site for phylloquinone. A helical transmembrane segment spans residues 729 to 749; sequence AVGVAHYLLGGIVTTWAFFLA.

It belongs to the PsaA/PsaB family. The PsaA/B heterodimer binds the P700 chlorophyll special pair and subsequent electron acceptors. PSI consists of a core antenna complex that captures photons, and an electron transfer chain that converts photonic excitation into a charge separation. The cyanobacterial PSI reaction center is composed of one copy each of PsaA,B,C,D,E,F,I,J,K,L,M and X, and forms trimeric complexes. Requires PSI electron transfer chain: 5 chlorophyll a, 1 chlorophyll a', 2 phylloquinones and 3 4Fe-4S clusters. PSI core antenna: 90 chlorophyll a, 22 carotenoids, 3 phospholipids and 1 galactolipid. P700 is a chlorophyll a/chlorophyll a' dimer, A0 is one or more chlorophyll a, A1 is one or both phylloquinones and FX is a shared 4Fe-4S iron-sulfur center. as cofactor.

The protein resides in the cellular thylakoid membrane. The enzyme catalyses reduced [plastocyanin] + hnu + oxidized [2Fe-2S]-[ferredoxin] = oxidized [plastocyanin] + reduced [2Fe-2S]-[ferredoxin]. In terms of biological role, psaA and PsaB bind P700, the primary electron donor of photosystem I (PSI), as well as the electron acceptors A0, A1 and FX. PSI is a plastocyanin/cytochrome c6-ferredoxin oxidoreductase, converting photonic excitation into a charge separation, which transfers an electron from the donor P700 chlorophyll pair to the spectroscopically characterized acceptors A0, A1, FX, FA and FB in turn. Oxidized P700 is reduced on the lumenal side of the thylakoid membrane by plastocyanin or cytochrome c6. The protein is Photosystem I P700 chlorophyll a apoprotein A1 of Synechococcus sp. (strain JA-3-3Ab) (Cyanobacteria bacterium Yellowstone A-Prime).